Here is a 435-residue protein sequence, read N- to C-terminus: Eukaryotic translation initiation factor 3 subunit E (435 aa).

Positions F219–L392 constitute a PCI domain.

The protein belongs to the eIF-3 subunit E family. Component of the eukaryotic translation initiation factor 3 (eIF-3) complex.

It is found in the cytoplasm. Its function is as follows. Component of the eukaryotic translation initiation factor 3 (eIF-3) complex, which is involved in protein synthesis of a specialized repertoire of mRNAs and, together with other initiation factors, stimulates binding of mRNA and methionyl-tRNAi to the 40S ribosome. The eIF-3 complex specifically targets and initiates translation of a subset of mRNAs involved in cell proliferation. The sequence is that of Eukaryotic translation initiation factor 3 subunit E (eIF3-S6) from Aedes aegypti (Yellowfever mosquito).